Consider the following 845-residue polypeptide: Translation initiation factor IF-2 (845 aa).

The segment at 1-260 (MSDEQDKPTL…HMTSSGPREK (260 aa)) is disordered. Positions 68 to 81 (APAPAPAAPRPAAP) are enriched in pro residues. Basic and acidic residues predominate over residues 101–140 (REAEEARMAALEENRRREEAERARAAEEERARAEKREEQA). Low complexity-rich tracts occupy residues 141-166 (ATKAPEPAPTPAASAPDATAADAPPA) and 173-191 (TAARPATASAAPAPRRFTP). A compositionally biased stretch (basic and acidic residues) spans 194–215 (ALKRPEPKRPEPKASRGGENRR). The tr-type G domain maps to 344–514 (PRAPVVTIMG…ALQAEIMELK (171 aa)). Residues 353 to 360 (GHVDHGKT) are G1. 353–360 (GHVDHGKT) provides a ligand contact to GTP. Residues 378 to 382 (GITQH) are G2. Residues 400-403 (DTPG) form a G3 region. Residues 400–404 (DTPGH) and 454–457 (NKVD) each bind GTP. Residues 454-457 (NKVD) form a G4 region. Residues 490–492 (SAL) form a G5 region.

This sequence belongs to the TRAFAC class translation factor GTPase superfamily. Classic translation factor GTPase family. IF-2 subfamily.

It localises to the cytoplasm. In terms of biological role, one of the essential components for the initiation of protein synthesis. Protects formylmethionyl-tRNA from spontaneous hydrolysis and promotes its binding to the 30S ribosomal subunits. Also involved in the hydrolysis of GTP during the formation of the 70S ribosomal complex. The chain is Translation initiation factor IF-2 from Sphingopyxis alaskensis (strain DSM 13593 / LMG 18877 / RB2256) (Sphingomonas alaskensis).